The following is a 199-amino-acid chain: Recombination protein RecR (199 aa).

The C4-type zinc-finger motif lies at Cys58 to Cys73. The region spanning Asn81–Pro175 is the Toprim domain.

The protein belongs to the RecR family.

May play a role in DNA repair. It seems to be involved in an RecBC-independent recombinational process of DNA repair. It may act with RecF and RecO. This chain is Recombination protein RecR, found in Prochlorococcus marinus (strain MIT 9515).